A 497-amino-acid chain; its full sequence is C4-dicarboxylate transport protein (497 aa).

Helical transmembrane passes span 27–45, 60–82, 95–117, 168–185, 205–227, 237–259, 348–370, and 374–393; these read LYVQVLAAIAVGILLGYFY, IMLVKMIIAPVIFLTVATGIAGM, AMIYFLTFSTLALLVGLVVANVV, ILQVLFISVLFGISLAIV, RLVAILMKAAPIGAFGAMAFTIG, LAMLIGTFYLTSFLFVFMVLGAV, ILLLLIAMLSSKGAAGITGAGFI, and ATLSAVPSVPVAGMALILGI. The segment at 466–497 is disordered; that stretch reads ADRTLAGRPGGRDSRRIAPDHSAQVFGGPLSL. Positions 475 to 484 are enriched in basic and acidic residues; that stretch reads GGRDSRRIAP.

Belongs to the dicarboxylate/amino acid:cation symporter (DAACS) (TC 2.A.23) family.

Its subcellular location is the cell inner membrane. Responsible for the transport of dicarboxylates such as succinate, fumarate, and malate from the periplasm across the inner membrane. This transport system plays an essential role in the energy supply of tropical rhizobium-legume symbionts. The chain is C4-dicarboxylate transport protein (dctA1) from Sinorhizobium fredii (strain NBRC 101917 / NGR234).